A 103-amino-acid chain; its full sequence is ATP-dependent Clp protease adapter protein ClpS (103 aa).

It belongs to the ClpS family. As to quaternary structure, binds to the N-terminal domain of the chaperone ClpA.

Its function is as follows. Involved in the modulation of the specificity of the ClpAP-mediated ATP-dependent protein degradation. The sequence is that of ATP-dependent Clp protease adapter protein ClpS from Neisseria meningitidis serogroup A / serotype 4A (strain DSM 15465 / Z2491).